A 297-amino-acid chain; its full sequence is Formiminotransferase cyclodeaminase-like protein (297 aa).

Positions 2–196 (LREMLGCCKV…GVVAVGACGW (195 aa)) are formiminotransferase N-subdomain. The For formimidoyltransferase activity role is filled by histidine 89. 178–187 (GPQEVSKAKG) contributes to the folate binding site.

Belongs to the formiminotransferase family. As to expression, expressed constitutively in roots, stems, leaves and flowers.

It localises to the golgi apparatus. The protein localises to the trans-Golgi network. The catalysed reaction is (6S)-5-formyl-5,6,7,8-tetrahydrofolate + L-glutamate = N-formyl-L-glutamate + (6S)-5,6,7,8-tetrahydrofolate + H(+). The enzyme catalyses 5-formimidoyltetrahydrofolate + L-glutamate = N-formimidoyl-L-glutamate + (6S)-5,6,7,8-tetrahydrofolate. Its pathway is one-carbon metabolism; tetrahydrofolate interconversion. Functionally, involved in the regulation of root growth. May regulate sorting and/or transportation of trans-Golgi network (TGN) vesicles in root cap peripheral cells, thus influencing the extracellular secretion of mucilage components in the root cap. The chain is Formiminotransferase cyclodeaminase-like protein from Arabidopsis thaliana (Mouse-ear cress).